Here is a 680-residue protein sequence, read N- to C-terminus: Pilus tip adhesin Cpa (680 aa).

Residues 62–211 (CFNLTKHFPS…IFQSSDKTFQ (150 aa)) constitute a cross-link (isoglutamyl cysteine thioester (Cys-Gln)). Residues 217-236 (EYVPDTPPKPGEEPPAKTEK) are disordered. A compositionally biased stretch (basic and acidic residues) spans 226–236 (PGEEPPAKTEK). Residues 243 to 546 (KYAEGDYSKL…ELIDVISMED (304 aa)) constitute a cross-link (isoaspartyl lysine isopeptide (Lys-Asp)). Residues 253 to 311 (LEGATLKLAQIEGSGFQEKIFDSNKSGEKVELPNGTYVLSELKPPQGYGVATPITFKVA) enclose the CNA-B domain. A cross-link (isoglutamyl cysteine thioester (Cys-Gln)) is located at residues 374 to 526 (CFNADLHSPP…FFVPNSSRYQ (153 aa)). Residues 562–667 (KTVTGTIADK…KEDETVAFEN (106 aa)) constitute a cross-link (isoaspartyl lysine isopeptide (Lys-Asn)). Positions 672-676 (VPPTG) match the VPPTG sorting signal motif. A Threonyl lysine isopeptide (Thr-Lys) (interchain with K-? in major pilin subunit) cross-link involves residue Thr-675. Residues 676-680 (GLTTD) constitute a propeptide, removed by sortase.

As to quaternary structure, monomer. In terms of processing, proteolytically processed and assembled in pili through a transpeptidation reaction catalyzed by a sortase, which leads to a covalent link between Cpa and a major pilin subunit.

It localises to the fimbrium. In terms of biological role, component of the pilus tip. Can bind covalently, via its two reactive thioester bonds, to molecular targets from host cell surface and can thus mediate adhesion of the streptococcal pili to host cells. Lysine side chains or a carbohydrate with a free amine group might be candidates for Cpa binding. In vitro, can covalently bind to spermidine, but it is unlikely that spermidine is the natural target of Cpa. This is Pilus tip adhesin Cpa (cpa) from Streptococcus pyogenes.